The following is a 703-amino-acid chain: Ion-translocating oxidoreductase complex subunit C (703 aa).

4Fe-4S ferredoxin-type domains lie at methionine 368 to tyrosine 397 and lysine 407 to tyrosine 436. [4Fe-4S] cluster is bound by residues cysteine 377, cysteine 380, cysteine 383, cysteine 387, cysteine 416, cysteine 419, cysteine 422, and cysteine 426. Disordered regions lie at residues alanine 505 to arginine 558 and alanine 653 to proline 674. A compositionally biased stretch (basic and acidic residues) spans alanine 524 to glutamine 539.

The protein belongs to the 4Fe4S bacterial-type ferredoxin family. RnfC subfamily. As to quaternary structure, the complex is composed of six subunits: RnfA, RnfB, RnfC, RnfD, RnfE and RnfG. [4Fe-4S] cluster serves as cofactor.

It localises to the cell inner membrane. Functionally, part of a membrane-bound complex that couples electron transfer with translocation of ions across the membrane. In Serratia proteamaculans (strain 568), this protein is Ion-translocating oxidoreductase complex subunit C.